The chain runs to 117 residues: Large ribosomal subunit protein bL20c (117 aa).

The protein belongs to the bacterial ribosomal protein bL20 family.

It is found in the plastid. It localises to the chloroplast. Its function is as follows. Binds directly to 23S ribosomal RNA and is necessary for the in vitro assembly process of the 50S ribosomal subunit. It is not involved in the protein synthesizing functions of that subunit. The sequence is that of Large ribosomal subunit protein bL20c from Platanus occidentalis (Sycamore).